The sequence spans 562 residues: DNA-binding protein MutS2 (562 aa).

Gly380–Thr387 is an ATP binding site.

This sequence belongs to the DNA mismatch repair MutS family. Archaeal Muts2 subfamily. In terms of assembly, multimer. Co(2+) serves as cofactor. Mn(2+) is required as a cofactor.

Functionally, has ATPase and non-specific DNA-binding activities. May be involved in recombination and/or recombinational repair. Not involved in mismatch repair. This is DNA-binding protein MutS2 from Pyrococcus furiosus (strain ATCC 43587 / DSM 3638 / JCM 8422 / Vc1).